Consider the following 144-residue polypeptide: Thyrostimulin alpha-2 subunit (144 aa).

An N-terminal signal peptide occupies residues 1-41 (MGRRDSGRAVAQRYRGVTRGVTVIACLMVVCACVGLCDATG). 4 disulfides stabilise this stretch: Cys52/Cys107, Cys66/Cys121, Cys76/Cys136, and Cys80/Cys138.

The protein belongs to the glycoprotein hormones subunit alpha family. In terms of assembly, heterodimer with GPHB5; non-covalently-linked. Expressed by the venom duct.

The protein localises to the secreted. This chain is Thyrostimulin alpha-2 subunit, found in Conus victoriae (Queen Victoria cone).